We begin with the raw amino-acid sequence, 359 residues long: Cytohesin-interacting protein (359 aa).

The PDZ domain maps to 77–166 (VVTVEKQDNG…LLTIETLNGT (90 aa)). Positions 165-188 (GTMIHRRAELEAKLQTLKQTLKKK) form a coiled coil. Residues 166-188 (TMIHRRAELEAKLQTLKQTLKKK) are interaction with CYTH1.

Interacts with CYTH1 and SNX27.

It is found in the cytoplasm. Its subcellular location is the early endosome. By its binding to cytohesin-1 (CYTH1), it modifies activation of ARFs by CYTH1 and its precise function may be to sequester CYTH1 in the cytoplasm. This Mus musculus (Mouse) protein is Cytohesin-interacting protein (Cytip).